Reading from the N-terminus, the 161-residue chain is ATP synthase subunit b 1 (161 aa).

The chain crosses the membrane as a helical span at residues 3 to 23 (LDATFYALVGLILFFVLIAYL).

It belongs to the ATPase B chain family. In terms of assembly, F-type ATPases have 2 components, F(1) - the catalytic core - and F(0) - the membrane proton channel. F(1) has five subunits: alpha(3), beta(3), gamma(1), delta(1), epsilon(1). F(0) has three main subunits: a(1), b(2) and c(10-14). The alpha and beta chains form an alternating ring which encloses part of the gamma chain. F(1) is attached to F(0) by a central stalk formed by the gamma and epsilon chains, while a peripheral stalk is formed by the delta and b chains.

It is found in the cell inner membrane. In terms of biological role, f(1)F(0) ATP synthase produces ATP from ADP in the presence of a proton or sodium gradient. F-type ATPases consist of two structural domains, F(1) containing the extramembraneous catalytic core and F(0) containing the membrane proton channel, linked together by a central stalk and a peripheral stalk. During catalysis, ATP synthesis in the catalytic domain of F(1) is coupled via a rotary mechanism of the central stalk subunits to proton translocation. Component of the F(0) channel, it forms part of the peripheral stalk, linking F(1) to F(0). In Sinorhizobium medicae (strain WSM419) (Ensifer medicae), this protein is ATP synthase subunit b 1.